The following is a 561-amino-acid chain: Carbohydrate sulfotransferase 15 (561 aa).

At 1–80 (MRHCINCCIQ…FLRFRKGKRC (80 aa)) the chain is on the cytoplasmic side. Residues 81 to 101 (SLVFGLIIMTLVMASYILSGA) traverse the membrane as a helical; Signal-anchor for type II membrane protein segment. Residues 102–561 (HQELLISSPF…DDEAFAWKTT (460 aa)) are Lumenal-facing. 263–267 (KCGTT) serves as a coordination point for 3'-phosphoadenylyl sulfate. An N-linked (GlcNAc...) asparagine glycan is attached at asparagine 364. Residues arginine 392 and serine 400 each contribute to the 3'-phosphoadenylyl sulfate site.

This sequence belongs to the sulfotransferase 1 family. In terms of assembly, homodimer; disulfide-linked (Potential). The relevance of homodimerization is however unsure. May interact with phosphorylated proteins in resting B-cells, including HCK. It depends on a divalent metal cation as a cofactor. The cofactor is glutathione. In terms of processing, glycosylated.

Its subcellular location is the golgi apparatus membrane. It catalyses the reaction dermatan 4'-sulfate + n 3'-phosphoadenylyl sulfate = dermatan 4',6'-bissulfate + n adenosine 3',5'-bisphosphate + n H(+). It carries out the reaction chondroitin 4'-sulfate + n 3'-phosphoadenylyl sulfate = chondroitin 4',6'-bissulfate + n adenosine 3',5'-bisphosphate + n H(+). Its activity is regulated as follows. Inhibited by phenyl beta-GalNAc(4,6-SO(4)). In terms of biological role, sulfotransferase that transfers sulfate from 3'-phosphoadenosine 5'-phosphosulfate (PAPS) to the C-6 hydroxyl group of the GalNAc 4-sulfate residue of chondroitin sulfate A and forms chondroitin sulfate E containing GlcA-GalNAc(4,6-SO(4)) repeating units. It also transfers sulfate to a unique non-reducing terminal sequence, GalNAc(4SO4)-GlcA(2SO4)-GalNAc(6SO4), to yield a highly sulfated structure similar to the structure found in thrombomodulin chondroitin sulfate. May also act as a B-cell receptor involved in BCR ligation-mediated early activation that mediate regulatory signals key to B-cell development and/or regulation of B-cell-specific RAG expression; however such results are unclear in vivo. This chain is Carbohydrate sulfotransferase 15 (Chst15), found in Rattus norvegicus (Rat).